Reading from the N-terminus, the 142-residue chain is Transcriptional regulator MraZ (142 aa).

SpoVT-AbrB domains follow at residues 5-47 and 76-119; these read EYQH…TINE and ACIV…SREK.

Belongs to the MraZ family. Forms oligomers.

It is found in the cytoplasm. It localises to the nucleoid. The sequence is that of Transcriptional regulator MraZ from Clostridium botulinum (strain Alaska E43 / Type E3).